The primary structure comprises 1150 residues: Solute carrier family 12 member 6 (1150 aa).

Residues 1–108 are disordered; it reads MHPPEATTKM…GEHSQLLDDG (108 aa). At 1-135 the chain is on the cytoplasmic side; sequence MHPPEATTKM…DEYFDKNLAL (135 aa). Positions 28-45 are enriched in low complexity; sequence LSDTSPDLSSRSSSRVRF. Phosphoserine is present on Ser-32. A compositionally biased stretch (polar residues) spans 80–101; that stretch reads DRTSNPQDVTEDPSQNSITGEH. Ser-120 carries the post-translational modification Phosphoserine. A discontinuously helical membrane pass occupies residues 136-158; it reads FEEEMDTRPKVSSLLNRMANYTN. The K(+) site is built by Ser-147 and Ser-148. Ser-148 is modified (phosphoserine). Chloride is bound at residue Asn-151. The Extracellular segment spans residues 159-165; it reads LTQGAKE. The disordered stretch occupies residues 161–181; the sequence is QGAKEHEEAENITEGKKKPTK. Residues 163–177 show a composition bias toward basic and acidic residues; sequence AKEHEEAENITEGKK. The helical transmembrane segment at 166 to 188 threads the bilayer; it reads HEEAENITEGKKKPTKSPQMGTF. Over 189–211 the chain is Cytoplasmic; sequence MGVYLPCLQNIFGVILFLRLTWV. Residues 212–245 traverse the membrane as a helical segment; it reads VGTAGILQAFAIVLICCCCTMLTAISMSAIATNG. Residues 246–263 lie on the Extracellular side of the membrane; it reads VVPAGGSYFMISRALGPE. 2 consecutive transmembrane segments (helical) span residues 264 to 287 and 288 to 316; these read FGGA…ILGA and IEIF…AMLN. Tyr-283 contacts K(+). At 317–433 the chain is on the extracellular side; it reads NMRVYGTAFL…FVHNNVISIQ (117 aa). Residues Cys-375 and Cys-390 are joined by a disulfide bond. 4 N-linked (GlcNAc...) asparagine glycosylation sites follow: Asn-379, Asn-398, Asn-411, and Asn-417. A disulfide bridge links Cys-410 with Cys-420. Residues 434–454 form a helical membrane-spanning segment; sequence GIPGLASGIITENLWSNYLPK. K(+)-binding residues include Ile-443, Thr-444, and Asn-446. Positions 443 and 444 each coordinate chloride. Residues Leu-447 and Trp-448 each contribute to the chloride site. Residues 455–464 are Cytoplasmic-facing; sequence GEIIEKPSAK. A helical membrane pass occupies residues 465–487; sequence SSDVLGNLNHEYVLADITTSFTL. At 488–518 the chain is on the extracellular side; sequence LVGIFFPSVTGIMAGSNRSGDLKDAQKSIPI. Thr-497 is a binding site for K(+). A helical membrane pass occupies residues 519–545; sequence GTILAILTTSFVYLSNVVLFGACIEGV. Residues 546-568 lie on the Cytoplasmic side of the membrane; that stretch reads VLRDKFGDAVKGNLVVGTLSWPS. A run of 2 helical transmembrane segments spans residues 569 to 589 and 590 to 612; these read PWVI…QSLT and GAPR…VFGH. A chloride-binding site is contributed by Ile-603. The Cytoplasmic portion of the chain corresponds to 613 to 629; sequence SKANGEPTWALLLTAAI. Helical transmembrane passes span 630–649 and 650–665; these read AELG…LSMF and FLMC…ALQT. Tyr-654 is a chloride binding site. At 666–1150 the chain is on the cytoplasmic side; the sequence is LLRTPNWRPR…GGSEVITIYS (485 aa). Residues 682–691 form a scissor helix region; the sequence is ALSFMGMSIC. Ser-736 carries the post-translational modification Phosphoserine. Phosphothreonine is present on Thr-778. Ser-981 carries the phosphoserine modification. Position 991 is a phosphothreonine (Thr-991). Ser-1023, Ser-1029, and Ser-1032 each carry phosphoserine. Thr-1048 is modified (phosphothreonine). Residue Tyr-1121 is modified to Phosphotyrosine.

The protein belongs to the SLC12A transporter family. K/Cl co-transporter subfamily. As to quaternary structure, homodimer; adopts a domain-swap conformation at the scissor helices connecting the transmembrane domain and C-terminal domain. Heterodimer with K-Cl cotransporter SLC12A5. Interacts (via C-terminus) with CKB; the interaction may be required for potassium-chloride cotransport activity. Post-translationally, phosphorylated, phosphorylation regulates transporter activity. Phosphorylated at Thr-991 and Thr-1048 by OXSR1/OSR1 and STK39/SPAK downstream of WNK kinases (WNK1, WNK2, WNK3 or WNK4), inhibiting the potassium-chloride cotransport activity. N-glycosylated. As to expression, expressed in hippocampus and corpus callosum (at protein level). Highly expressed throughout the brain and detected at lower levels in kidney. Highly expressed in highly myelinated white matter of the brain, but not in gray matter. Detected in the corpus callosum, in packed cell layers of the hippocampus and in Purkinje neurons within the cerebellum. Highly expressed in white matter in the spinal cord, but not in dorsal root ganglia or sciatic nerve. Colocalizes with the oligodendrocyte marker CNP. Expressed in hippocampus in CA1, and to a lesser extent CA3 pyramidal cells. Also expressed in cortex, mostly in large neurons and in the large cerebellar Purkinje cells. In terms of tissue distribution, highly expressed in kidney, but not detected in brain.

It is found in the cell membrane. The protein resides in the basolateral cell membrane. It catalyses the reaction K(+)(in) + chloride(in) = K(+)(out) + chloride(out). With respect to regulation, inhibited following phosphorylation by OXSR1/OSR1 and STK39/SPAK: phosphorylation takes place downstream of WNK kinases (WNK1, WNK2, WNK3 or WNK4) in response to hyperosmotic stress and subsequent cell shrinkage. Its function is as follows. Mediates electroneutral potassium-chloride cotransport when activated by cell swelling. May contribute to cell volume homeostasis in single cells. In terms of biological role, mediates electroneutral potassium-chloride cotransport when activated by cell swelling. May contribute to cell volume homeostasis in single cells. The chain is Solute carrier family 12 member 6 (Slc12a6) from Mus musculus (Mouse).